The chain runs to 301 residues: Glutathione transport system permease protein GsiD (301 aa).

The next 6 membrane-spanning stretches (helical) occupy residues 37–57 (VAVA…WAQY), 103–123 (LAAG…LGLL), 141–161 (VLFA…MGSG), 162–182 (MANV…RLVR), 220–240 (IVVF…SLSF), and 264–284 (VIAP…VLAF). One can recognise an ABC transmembrane type-1 domain in the interval 99-288 (TRISLAAGIF…LTVLAFNLLG (190 aa)).

This sequence belongs to the binding-protein-dependent transport system permease family. In terms of assembly, the complex is composed of two ATP-binding proteins (GsiA), two transmembrane proteins (GsiC and GsiD) and a solute-binding protein (GsiB).

It is found in the cell inner membrane. Functionally, part of the ABC transporter complex GsiABCD involved in glutathione import. Probably responsible for the translocation of the substrate across the membrane. The protein is Glutathione transport system permease protein GsiD of Pectobacterium atrosepticum (strain SCRI 1043 / ATCC BAA-672) (Erwinia carotovora subsp. atroseptica).